Here is a 245-residue protein sequence, read N- to C-terminus: RAD51-like protein 1 (245 aa).

As to quaternary structure, interacts with brc-2 and rad-51.

The protein resides in the nucleus. Functionally, has a role in the homologous recombination repair (HRR) of genomic DNA during meiosis. Required for rad-51 recruitment onto ssDNA gaps generated at stalled replication fork barriers. The polypeptide is RAD51-like protein 1 (rfs-1) (Caenorhabditis elegans).